Reading from the N-terminus, the 625-residue chain is tRNA uridine 5-carboxymethylaminomethyl modification enzyme MnmG (625 aa).

FAD contacts are provided by residues 9-14, V121, and S176; that span reads GGGHAG. NAD(+) is bound at residue 270–284; sequence GPRYCPSIEDKIYRF. Q367 provides a ligand contact to FAD.

This sequence belongs to the MnmG family. In terms of assembly, homodimer. Heterotetramer of two MnmE and two MnmG subunits. FAD serves as cofactor.

Its subcellular location is the cytoplasm. Its function is as follows. NAD-binding protein involved in the addition of a carboxymethylaminomethyl (cmnm) group at the wobble position (U34) of certain tRNAs, forming tRNA-cmnm(5)s(2)U34. This Nitratiruptor sp. (strain SB155-2) protein is tRNA uridine 5-carboxymethylaminomethyl modification enzyme MnmG.